We begin with the raw amino-acid sequence, 207 residues long: Large ribosomal subunit protein uL4 (207 aa).

A disordered region spans residues 50 to 76 (AVKNRSAVSGGGRKPWKQKGTGRARQG).

It belongs to the universal ribosomal protein uL4 family. Part of the 50S ribosomal subunit.

Its function is as follows. One of the primary rRNA binding proteins, this protein initially binds near the 5'-end of the 23S rRNA. It is important during the early stages of 50S assembly. It makes multiple contacts with different domains of the 23S rRNA in the assembled 50S subunit and ribosome. Forms part of the polypeptide exit tunnel. This chain is Large ribosomal subunit protein uL4, found in Macrococcus caseolyticus (strain JCSC5402) (Macrococcoides caseolyticum).